The sequence spans 490 residues: Betaine aldehyde dehydrogenase (490 aa).

Threonine 26, isoleucine 27, and aspartate 93 together coordinate K(+). 150–152 (GAW) contributes to the NAD(+) binding site. Lysine 162 functions as the Charge relay system in the catalytic mechanism. 176 to 179 (KPSE) contributes to the NAD(+) binding site. A K(+)-binding site is contributed by valine 180. 230–233 (GTST) contacts NAD(+). Leucine 246 contributes to the K(+) binding site. Catalysis depends on glutamate 252, which acts as the Proton acceptor. Glycine 254, cysteine 286, and glutamate 387 together coordinate NAD(+). The active-site Nucleophile is cysteine 286. Cysteine 286 carries the cysteine sulfenic acid (-SOH) modification. K(+) is bound by residues lysine 457 and glycine 460. Catalysis depends on glutamate 464, which acts as the Charge relay system.

Belongs to the aldehyde dehydrogenase family. As to quaternary structure, dimer of dimers. Requires K(+) as cofactor.

The enzyme catalyses betaine aldehyde + NAD(+) + H2O = glycine betaine + NADH + 2 H(+). It participates in amine and polyamine biosynthesis; betaine biosynthesis via choline pathway; betaine from betaine aldehyde: step 1/1. Its function is as follows. Involved in the biosynthesis of the osmoprotectant glycine betaine. Catalyzes the irreversible oxidation of betaine aldehyde to the corresponding acid. The protein is Betaine aldehyde dehydrogenase of Pseudomonas aeruginosa (strain UCBPP-PA14).